The sequence spans 179 residues: MPSPALLCCCLVLLAGVGASRHQSTLSEDDCTHFPASLPHMLRELRAAFGRVKTFFQMKDKLDNILLTGSLLEDFKGYLGCQALSEMIQFYLEEVMPRAENHDPDIKDHVNSLGEKLKTLRLRLRRCHRFLPCENKSKAVEQVKSAFSKLQEKGVYKAMSEFDIFINYIETYMTMRMKI.

The signal sequence occupies residues Met-1 to Ala-19. 2 disulfides stabilise this stretch: Cys-31–Cys-127 and Cys-81–Cys-133. An N-linked (GlcNAc...) asparagine glycan is attached at Asn-135.

Belongs to the IL-10 family. In terms of assembly, homodimer. Interacts with IL10RA and IL10RB.

It localises to the secreted. Its function is as follows. Major immune regulatory cytokine that acts on many cells of the immune system where it has profound anti-inflammatory functions, limiting excessive tissue disruption caused by inflammation. Mechanistically, IL10 binds to its heterotetrameric receptor comprising IL10RA and IL10RB leading to JAK1 and STAT2-mediated phosphorylation of STAT3. In turn, STAT3 translocates to the nucleus where it drives expression of anti-inflammatory mediators. Targets antigen-presenting cells (APCs) such as macrophages and monocytes and inhibits their release of pro-inflammatory cytokines including granulocyte-macrophage colony-stimulating factor /GM-CSF, granulocyte colony-stimulating factor/G-CSF, IL-1 alpha, IL-1 beta, IL-6, IL-8 and TNF-alpha. Also interferes with antigen presentation by reducing the expression of MHC-class II and co-stimulatory molecules, thereby inhibiting their ability to induce T cell activation. In addition, controls the inflammatory response of macrophages by reprogramming essential metabolic pathways including mTOR signaling. The chain is Interleukin-10 (IL10) from Vulpes vulpes (Red fox).